The following is a 353-amino-acid chain: UDP-3-O-acylglucosamine N-acyltransferase (353 aa).

H258 acts as the Proton acceptor in catalysis.

The protein belongs to the transferase hexapeptide repeat family. LpxD subfamily. As to quaternary structure, homotrimer.

It carries out the reaction a UDP-3-O-[(3R)-3-hydroxyacyl]-alpha-D-glucosamine + a (3R)-hydroxyacyl-[ACP] = a UDP-2-N,3-O-bis[(3R)-3-hydroxyacyl]-alpha-D-glucosamine + holo-[ACP] + H(+). It participates in bacterial outer membrane biogenesis; LPS lipid A biosynthesis. Its function is as follows. Catalyzes the N-acylation of UDP-3-O-acylglucosamine using 3-hydroxyacyl-ACP as the acyl donor. Is involved in the biosynthesis of lipid A, a phosphorylated glycolipid that anchors the lipopolysaccharide to the outer membrane of the cell. In Parvibaculum lavamentivorans (strain DS-1 / DSM 13023 / NCIMB 13966), this protein is UDP-3-O-acylglucosamine N-acyltransferase.